A 500-amino-acid polypeptide reads, in one-letter code: Squalene epoxidase ERG1 (500 aa).

The chain crosses the membrane as a helical span at residues 20–40 (EADVVVVGAGVFGCTMAFALA). FAD contacts are provided by residues 30–31 (VF), 50–51 (ER), Arg58, Arg145, Asp332, and Met345. A run of 2 helical transmembrane segments spans residues 450–470 (AFLA…LGIF) and 474–494 (LAII…IPIM).

The protein belongs to the squalene monooxygenase family. FAD is required as a cofactor.

Its subcellular location is the microsome membrane. It localises to the endoplasmic reticulum membrane. It is found in the lipid droplet. The catalysed reaction is squalene + reduced [NADPH--hemoprotein reductase] + O2 = (S)-2,3-epoxysqualene + oxidized [NADPH--hemoprotein reductase] + H2O + H(+). The protein operates within terpene metabolism; lanosterol biosynthesis; lanosterol from farnesyl diphosphate: step 2/3. It participates in steroid metabolism; ergosterol biosynthesis. Functionally, squalene epoxidase; part of the third module of ergosterol biosynthesis pathway that includes the late steps of the pathway. ERG1 catalyzes the epoxidation of squalene into 2,3-epoxysqualene. The third module or late pathway involves the ergosterol synthesis itself through consecutive reactions that mainly occur in the endoplasmic reticulum (ER) membrane. Firstly, the squalene synthase ERG9 catalyzes the condensation of 2 farnesyl pyrophosphate moieties to form squalene, which is the precursor of all steroids. Squalene synthase is crucial for balancing the incorporation of farnesyl diphosphate (FPP) into sterol and nonsterol isoprene synthesis. Secondly, squalene is converted into lanosterol by the consecutive action of the squalene epoxidase ERG1 and the lanosterol synthase ERG7. Then, the delta(24)-sterol C-methyltransferase ERG6 methylates lanosterol at C-24 to produce eburicol. Eburicol is the substrate of the sterol 14-alpha demethylase encoded by CYP51A, CYP51B and CYP51C, to yield 4,4,24-trimethyl ergosta-8,14,24(28)-trienol. CYP51B encodes the enzyme primarily responsible for sterol 14-alpha-demethylation, and plays an essential role in ascospore formation. CYP51A encodes an additional sterol 14-alpha-demethylase, induced on ergosterol depletion and responsible for the intrinsic variation in azole sensitivity. The third CYP51 isoform, CYP51C, does not encode a sterol 14-alpha-demethylase, but is required for full virulence on host wheat ears. The C-14 reductase ERG24 then reduces the C14=C15 double bond which leads to 4,4-dimethylfecosterol. A sequence of further demethylations at C-4, involving the C-4 demethylation complex containing the C-4 methylsterol oxidases ERG25, the sterol-4-alpha-carboxylate 3-dehydrogenase ERG26 and the 3-keto-steroid reductase ERG27, leads to the production of fecosterol via 4-methylfecosterol. ERG28 has a role as a scaffold to help anchor ERG25, ERG26 and ERG27 to the endoplasmic reticulum. The C-8 sterol isomerase ERG2 then catalyzes the reaction which results in unsaturation at C-7 in the B ring of sterols and thus converts fecosterol to episterol. The sterol-C5-desaturases ERG3A and ERG3BB then catalyze the introduction of a C-5 double bond in the B ring to produce 5-dehydroepisterol. The C-22 sterol desaturases ERG5A and ERG5B further convert 5-dehydroepisterol into ergosta-5,7,22,24(28)-tetraen-3beta-ol by forming the C-22(23) double bond in the sterol side chain. Finally, ergosta-5,7,22,24(28)-tetraen-3beta-ol is substrate of the C-24(28) sterol reductase ERG4 to produce ergosterol. This is Squalene epoxidase ERG1 from Gibberella zeae (strain ATCC MYA-4620 / CBS 123657 / FGSC 9075 / NRRL 31084 / PH-1) (Wheat head blight fungus).